The following is a 402-amino-acid chain: Calcium-responsive transactivator (402 aa).

The interval Met1–Ser148 is N-terminal auto-inhibitory domain; necessary for interaction with SMARCA4/BRG1. Positions Tyr50–Ile53 match the SH2-binding motif. Disordered stretches follow at residues Gln72–Gln171 and Ala221–Gln402. The span at Leu85–Ser106 shows a compositional bias: low complexity. Polar residues-rich tracts occupy residues Asn128 to Gly149 and Ser161 to Gln171. Residues Gly149 to Met238 form a methionine-rich intra-molecular domain region. Low complexity predominate over residues Met233–Gln251. The MFD domain stretch occupies residues Tyr252 to Tyr323. Residues Glu261–Tyr277 show a composition bias toward polar residues. Positions Ser296–Thr305 are enriched in basic and acidic residues. Residues Gly311–Tyr375 are compositionally biased toward low complexity. The interval Asn340–Gln402 is necessary for nuclear localization. Residues Ser359 to Ser362 carry the SH2-binding motif. A compositionally biased stretch (polar residues) spans Arg376–Arg388. The short motif at Thr377–Gln385 is the SH3-binding element. Low complexity predominate over residues Tyr390–Gln402. The tract at residues Glu393 to Gln402 is necessary for interaction with CREBBP and for the recruitment of CREBBP to the nuclear bodies. The SH2-binding signature appears at Tyr397 to Tyr400.

This sequence belongs to the SS18 family. Homodimer. Dimerization may be necessary for its function in neuronal dendritic development. Interacts (via C-terminus) with CREBBP (via N-terminus), EP300 and SMARCA4/BRG1. Interacts with the nBAF complex. Association with CREBBP facilitates transcription while the association with SMARCA4/BRG1 suppresses CREST-mediated transcription in resting neurons.

It is found in the nucleus. Its subcellular location is the chromosome. It localises to the centromere. The protein localises to the kinetochore. Its function is as follows. Transcriptional activator which is required for calcium-dependent dendritic growth and branching in cortical neurons. Recruits CREB-binding protein (CREBBP) to nuclear bodies. Component of the CREST-BRG1 complex, a multiprotein complex that regulates promoter activation by orchestrating a calcium-dependent release of a repressor complex and a recruitment of an activator complex. In resting neurons, transcription of the c-FOS promoter is inhibited by BRG1-dependent recruitment of a phospho-RB1-HDAC1 repressor complex. Upon calcium influx, RB1 is dephosphorylated by calcineurin, which leads to release of the repressor complex. At the same time, there is increased recruitment of CREBBP to the promoter by a CREST-dependent mechanism, which leads to transcriptional activation. The CREST-BRG1 complex also binds to the NR2B promoter, and activity-dependent induction of NR2B expression involves a release of HDAC1 and recruitment of CREBBP. This chain is Calcium-responsive transactivator (Ss18l1), found in Mus musculus (Mouse).